We begin with the raw amino-acid sequence, 285 residues long: Tumor necrosis factor ligand superfamily member 13B (285 aa).

The Cytoplasmic segment spans residues 1 to 46 (MDDSTEREQSRLTSCLKKREEMKLKECVSILPRKESPSVRSSKDGK). A helical; Signal-anchor for type II membrane protein membrane pass occupies residues 47–67 (LLAATLLLALLSCCLTVVSFY). The Extracellular portion of the chain corresponds to 68-285 (QVAALQGDLA…VTFFGALKLL (218 aa)). A disordered region spans residues 114-138 (IFEPPAPGEGNSSQNSRNKRAVQGP). An N-linked (GlcNAc...) asparagine glycan is attached at Asn-124. In terms of domain architecture, THD spans 145–284 (DCLQLIADSE…DVTFFGALKL (140 aa)). Cysteines 232 and 245 form a disulfide. Residue Asn-242 is glycosylated (N-linked (GlcNAc...) (high mannose) asparagine).

The protein belongs to the tumor necrosis factor family. Homotrimer. Isoform 2 heteromultimerizes with isoform 1, probably limiting the amount of functional isoform 1 on the cell surface. Isoform 3 is unlikely form trimers or bind to BAFF receptors. Post-translationally, the soluble form derives from the membrane form by proteolytic processing. In terms of processing, isoform 2 is not efficiently shed from the membrane unlike isoform 1. N-glycosylated. Abundantly expressed in peripheral blood Leukocytes and is specifically expressed in monocytes and macrophages. Also found in the spleen, lymph node, bone marrow, T-cells and dendritic cells. A lower expression seen in placenta, heart, lung, fetal liver, thymus, and pancreas. Isoform 2 is expressed in many myeloid cell lines.

Its subcellular location is the cell membrane. The protein localises to the secreted. Functionally, cytokine that binds to TNFRSF13B/TACI and TNFRSF17/BCMA. TNFSF13/APRIL binds to the same 2 receptors. Together, they form a 2 ligands -2 receptors pathway involved in the stimulation of B- and T-cell function and the regulation of humoral immunity. A third B-cell specific BAFF-receptor (BAFFR/BR3) promotes the survival of mature B-cells and the B-cell response. In terms of biological role, isoform 2 seems to inhibit isoform 1 secretion and bioactivity. Its function is as follows. Acts as a transcription factor for its own parent gene, in association with NF-kappa-B p50 subunit, at least in autoimmune and proliferative B-cell diseases. The presence of Delta4BAFF is essential for soluble BAFF release by IFNG/IFN-gamma-stimulated monocytes and for B-cell survival. It can directly or indirectly regulate the differential expression of a large number of genes involved in the innate immune response and the regulation of apoptosis. This chain is Tumor necrosis factor ligand superfamily member 13B (TNFSF13B), found in Homo sapiens (Human).